We begin with the raw amino-acid sequence, 326 residues long: Microtubule-associated protein RP/EB family member 2 (326 aa).

The residue at position 9 (Ser-9) is a Phosphoserine. Residues 56–158 (TMSRHDIIAW…FIQWFKKFYD (103 aa)) form the Calponin-homology (CH) domain. A Phosphotyrosine modification is found at Tyr-166. Disordered regions lie at residues 170 to 239 (EARQ…DKDL) and 297 to 326 (YASDEQEGQTEEPEVEEQTHDQQPQQQEEY). The segment at 186-326 (QIFNLPKKSH…DQQPQQQEEY (141 aa)) is DCTN1-binding. Over residues 199–233 (SPTAGAAKSSPAAKPGSTPSRPSSAKRASSSGSAS) the composition is skewed to low complexity. 2 positions are modified to phosphoserine: Ser-218 and Ser-235. In terms of domain architecture, EB1 C-terminal spans 235 to 305 (SDKDLETQVI…LYASDEQEGQ (71 aa)). The tract at residues 258 to 301 (EGVEKERDFYFGKLREIELLCQEHGQENDDLVQRLMEVLYASDE) is APC-binding. Residues 300–312 (DEQEGQTEEPEVE) are compositionally biased toward acidic residues. A compositionally biased stretch (low complexity) spans 317–326 (DQQPQQQEEY).

Belongs to the MAPRE family. As to quaternary structure, interacts with DCTN1. Interacts with APC (via C-terminal). Interacts with monomeric and polymerized tubulin. Interacts with SLAIN1. Interacts (via the N-terminal region) with BAG1. Interacts with ASB14. Interacts with HAX1; this interaction is essential for epidermal cell migration. Post-translationally, phosphorylated at Ser-235 by CK2 leading to enhanced cell adhesion. Phosphorylated by CDK1 and AURKB during mitosis reduces the binding affinity of MAPRE2 for microtubules. In terms of processing, ubiquitinated in an ASB14-dependent manner; leading to proteasomal degradation.

Its subcellular location is the cytoplasm. It localises to the cytoskeleton. Its function is as follows. Adapter protein that is involved in microtubule polymerization, and spindle function by stabilizing microtubules and anchoring them at centrosomes. Therefore, ensures mitotic progression and genome stability. Acts as a central regulator of microtubule reorganization in apico-basal epithelial differentiation. Plays a role during oocyte meiosis by regulating microtubule dynamics. Participates in neurite growth by interacting with plexin B3/PLXNB3 and microtubule reorganization during apico-basal epithelial differentiation. Also plays an essential role for cell migration and focal adhesion dynamics. Mechanistically, recruits HAX1 to microtubules in order to regulate focal adhesion dynamics. The sequence is that of Microtubule-associated protein RP/EB family member 2 (Mapre2) from Rattus norvegicus (Rat).